Consider the following 302-residue polypeptide: Protein MGF 110-11L (302 aa).

Residues 26-46 (PFGCNMKGLGVLLGLFSLILA) traverse the membrane as a helical segment. Asn-97 carries an N-linked (GlcNAc...) asparagine; by host glycan. The next 2 membrane-spanning stretches (helical) occupy residues 154–174 (LTLK…GCFV) and 183–203 (LNTT…AQPV). Asn-294 carries N-linked (GlcNAc...) asparagine; by host glycosylation.

This sequence belongs to the asfivirus MGF 110 family.

It is found in the host membrane. Plays a role in virus cell tropism, and may be required for efficient virus replication in macrophages. The chain is Protein MGF 110-11L from African swine fever virus (isolate Tick/South Africa/Pretoriuskop Pr4/1996) (ASFV).